A 561-amino-acid chain; its full sequence is Laccase-1 (561 aa).

The signal sequence occupies residues 1–20; sequence MKNSFFSSLAKFASLSLAFA. Plastocyanin-like domains lie at 68–185 and 191–337; these read VVQN…GPAT and DLGM…YTGS. Residues N71, N87, and N114 are each glycosylated (N-linked (GlcNAc...) asparagine). H119, H121, H163, and H165 together coordinate Cu cation. C140 and C542 are oxidised to a cystine. N-linked (GlcNAc...) asparagine glycans are attached at residues N226, N284, N327, N391, and N398. The Plastocyanin-like 3 domain occupies 396–525; that stretch reads LLNWTDPTLL…ALQFVESESS (130 aa). Residues H445, H448, H450, H504, C505, H506, and H510 each contribute to the Cu cation site.

Belongs to the multicopper oxidase family. Cu cation serves as cofactor.

The protein resides in the secreted. The catalysed reaction is 4 hydroquinone + O2 = 4 benzosemiquinone + 2 H2O. Its function is as follows. Lignin degradation and detoxification of lignin-derived products. This chain is Laccase-1 (lcc1), found in Botryotinia fuckeliana (Noble rot fungus).